A 222-amino-acid polypeptide reads, in one-letter code: Cytochrome b6 (222 aa).

Residues 39–59 (IFYCLGGITLVCFIIQFATGF) form a helical membrane-spanning segment. Position 42 (Cys-42) interacts with heme c. 2 residues coordinate heme b: His-93 and His-107. A run of 3 helical transmembrane segments spans residues 97–117 (ASMM…TGGF), 123–143 (LTWI…VTGY), and 193–213 (LHTF…FLMI). His-194 and His-209 together coordinate heme b.

It belongs to the cytochrome b family. PetB subfamily. In terms of assembly, the 4 large subunits of the cytochrome b6-f complex are cytochrome b6, subunit IV (17 kDa polypeptide, PetD), cytochrome f and the Rieske protein, while the 4 small subunits are PetG, PetL, PetM and PetN. The complex functions as a dimer. It depends on heme b as a cofactor. Heme c is required as a cofactor.

The protein localises to the cellular thylakoid membrane. Its function is as follows. Component of the cytochrome b6-f complex, which mediates electron transfer between photosystem II (PSII) and photosystem I (PSI), cyclic electron flow around PSI, and state transitions. In Prochlorothrix hollandica, this protein is Cytochrome b6.